A 189-amino-acid polypeptide reads, in one-letter code: uncharacterized protein (189 aa).

Positions 31 to 54 (KCENIDDLANRYEVSKQEVEKVFK) form a coiled coil. EF-hand domains follow at residues 47–82 (QEVE…LGID), 83–118 (VSPK…KIKL), 120–155 (TVKA…TVST), and 157–189 (ITVK…CQTV). Positions 60, 62, 64, 66, 71, 96, 98, 100, 102, 107, 133, 135, 137, and 144 each coordinate Ca(2+).

This is an uncharacterized protein from Caenorhabditis elegans.